Reading from the N-terminus, the 168-residue chain is 3-dehydroquinate dehydratase (168 aa).

Tyr22 serves as the catalytic Proton acceptor. Residues Asn76, His82, and Asp89 each contribute to the substrate site. The Proton donor role is filled by His102. Residues 103–104 (LT) and Arg113 contribute to the substrate site.

The protein belongs to the type-II 3-dehydroquinase family. As to quaternary structure, homododecamer.

It catalyses the reaction 3-dehydroquinate = 3-dehydroshikimate + H2O. Its pathway is metabolic intermediate biosynthesis; chorismate biosynthesis; chorismate from D-erythrose 4-phosphate and phosphoenolpyruvate: step 3/7. In terms of biological role, catalyzes a trans-dehydration via an enolate intermediate. The sequence is that of 3-dehydroquinate dehydratase from Helicobacter acinonychis (strain Sheeba).